The chain runs to 57 residues: Large ribosomal subunit protein eL20 (57 aa).

It belongs to the eukaryotic ribosomal protein eL20 family. In terms of assembly, part of the 50S ribosomal subunit. Binds 23S rRNA.

The sequence is that of Large ribosomal subunit protein eL20 from Archaeoglobus fulgidus (strain ATCC 49558 / DSM 4304 / JCM 9628 / NBRC 100126 / VC-16).